A 530-amino-acid polypeptide reads, in one-letter code: Alkyl hydroperoxide reductase subunit F (530 aa).

214 to 229 (DVLVVGGGPAGSAAAV) serves as a coordination point for FAD. The cysteines at positions 344 and 347 are disulfide-linked. 356–370 (RVAVIGGGNSGVEAA) is an NAD(+) binding site. Position 477 to 487 (477 to 487 (TDVPGVFAAGD)) interacts with FAD.

It belongs to the class-II pyridine nucleotide-disulfide oxidoreductase family. Homodimer. It depends on FAD as a cofactor.

In terms of biological role, serves to protect the cell against DNA damage by alkyl hydroperoxides. It can use either NADH or NADPH as electron donor for direct reduction of redox dyes or of alkyl hydroperoxides when combined with the AhpC protein. The polypeptide is Alkyl hydroperoxide reductase subunit F (ahpF) (Xanthomonas campestris pv. phaseoli).